The following is a 173-amino-acid chain: Photosystem I assembly protein Ycf3 (173 aa).

TPR repeat units lie at residues 35 to 68 (AFYYYKDGMAAQSEGEYAEALACYYQALKIEKDP), 72 to 105 (SFILYNIGLIQASNGQHARALEYYHESLKFNPNL), and 120 to 153 (GNKLFEQSKLQEAKLMFDKASNYWRKAIKLAPYN).

This sequence belongs to the Ycf3 family.

The protein resides in the plastid. Its subcellular location is the chloroplast thylakoid membrane. Its function is as follows. Essential for the assembly of the photosystem I (PSI) complex. May act as a chaperone-like factor to guide the assembly of the PSI subunits. The polypeptide is Photosystem I assembly protein Ycf3 (Cyanidium caldarium (Red alga)).